The primary structure comprises 551 residues: Membrane protein insertase YidC (551 aa).

The helical transmembrane segment at 3–23 (ANHIRILLLVTIAIMFISLMG) threads the bilayer. Residues 33-47 (NTKQQTSATQNNSHY) are compositionally biased toward polar residues. Positions 33 to 59 (NTKQQTSATQNNSHYDNADSSTNTDVT) are disordered. Residues 50-59 (ADSSTNTDVT) are compositionally biased toward low complexity. The next 3 membrane-spanning stretches (helical) occupy residues 361–381 (LVGNWGLAIILVTCLIKLIFY), 431–451 (LSGCLPMLIQIPIFISLYWVL), and 504–524 (VMMFLPVIFTFLFASFPSGLV).

Belongs to the OXA1/ALB3/YidC family. Type 1 subfamily. In terms of assembly, interacts with the Sec translocase complex via SecD. Specifically interacts with transmembrane segments of nascent integral membrane proteins during membrane integration.

The protein resides in the cell inner membrane. In terms of biological role, required for the insertion and/or proper folding and/or complex formation of integral membrane proteins into the membrane. Involved in integration of membrane proteins that insert both dependently and independently of the Sec translocase complex, as well as at least some lipoproteins. Aids folding of multispanning membrane proteins. This is Membrane protein insertase YidC from Francisella tularensis subsp. mediasiatica (strain FSC147).